The chain runs to 243 residues: Aspartate/glutamate leucyltransferase (243 aa).

Belongs to the R-transferase family. Bpt subfamily.

The protein resides in the cytoplasm. It catalyses the reaction N-terminal L-glutamyl-[protein] + L-leucyl-tRNA(Leu) = N-terminal L-leucyl-L-glutamyl-[protein] + tRNA(Leu) + H(+). It carries out the reaction N-terminal L-aspartyl-[protein] + L-leucyl-tRNA(Leu) = N-terminal L-leucyl-L-aspartyl-[protein] + tRNA(Leu) + H(+). In terms of biological role, functions in the N-end rule pathway of protein degradation where it conjugates Leu from its aminoacyl-tRNA to the N-termini of proteins containing an N-terminal aspartate or glutamate. This Teredinibacter turnerae (strain ATCC 39867 / T7901) protein is Aspartate/glutamate leucyltransferase.